The following is a 586-amino-acid chain: MMIAERGVRASARGVLSLHHIGKTYPRVMPRSKRGVWGMFGHPGRRAVDDAHTAHGPCSGARETDAAEHSVLSDVNLSFFTGEIHALLGKNGAGKSTLAHILSGFCVPTHGQLRLDGKEQRFSVPFDALRAGIGIVHQQPVFAERATVFENVVMGSAALTGVRWVRRAQVRERIDRIIAQWRMPLKKEEYVACLSADKRFFVSLLCVLFRNPRFIILDEPRCAPAQSRAVFFSHLEEFFVRSSHAPRCGGGVIVVTHRFADALRWAQRISLIEGGKACSFLRTDLLDEYCSAHQVNECIQKVSCALMSASTVTSSAVSSFSSLSDTQSCATVPRTSSARPWVLRVESLQVSKHADVPLTDISFSVAASAIIGIVGTPEDGVHVLEDILCDMHAGASRTHCTGNILLQEHDQVWCLPLQRNTPSLLRAHGVACVPSNCIQRGASMQLTLFDLLVPYTLRTWRTRVRAQMRFVARLLAEEEIYCDPLQPACTLSGGQLQRVILARELATRPRLLILAEPAEGLDSASEQRLLARLRQVAQAGTALVLLAREQHQAQWRALCTERFLLRAGTLCAEVSGTPSPSQDSHT.

ABC transporter domains lie at 46–299 (RAVD…NECI) and 343–586 (LRVE…DSHT). Residue 89–96 (GKNGAGKS) participates in ATP binding.

It belongs to the ABC transporter superfamily. In terms of assembly, the complex is probably composed of two ATP-binding proteins (RfuB), two transmembrane proteins (RfuC and RfuD) and a solute-binding protein (RfuA).

It is found in the cell inner membrane. Functionally, probably part of the ABC transporter complex RfuABCD involved in riboflavin import. Probably responsible for energy coupling to the transport system. The sequence is that of Probable riboflavin import ATP-binding protein RfuB from Treponema pallidum (strain Nichols).